The sequence spans 242 residues: Exosome complex component ski6 (242 aa).

The protein belongs to the RNase PH family. Component of the RNA exosome complex. Specifically part of the catalytically inactive RNA exosome core complex (Exo-9) which may associate with the catalytic subunits rrp6 and dis3 in cytoplasmic- and nuclear-specific RNA exosome complex forms. Exo-9 is formed by a hexameric base ring of RNase PH domain-containing subunits and a cap ring consisting of csl4, rrp4 and rrp40.

It localises to the cytoplasm. The protein localises to the nucleus. Its subcellular location is the nucleolus. Non-catalytic component of the RNA exosome complex which has 3'-&gt;5' exoribonuclease activity and participates in a multitude of cellular RNA processing and degradation events. In the nucleus, the RNA exosome complex is involved in proper maturation of stable RNA species such as rRNA, snRNA and snoRNA, in the elimination of RNA processing by-products and non-coding 'pervasive' transcripts, such as antisense RNA species and cryptic unstable transcripts (CUTs), and of mRNAs with processing defects, thereby limiting or excluding their export to the cytoplasm. In the cytoplasm, the RNA exosome complex is involved in general mRNA turnover and in RNA surveillance pathways, preventing translation of aberrant mRNAs. The catalytic inactive RNA exosome core complex of 9 subunits (Exo-9) is proposed to play a pivotal role in the binding and presentation of RNA for ribonucleolysis, and to serve as a scaffold for the association with catalytic subunits and accessory proteins or complexes. ski6 is part of the hexameric ring of RNase PH domain-containing subunits proposed to form a central channel which threads RNA substrates for degradation. This is Exosome complex component ski6 (ski6) from Schizosaccharomyces pombe (strain 972 / ATCC 24843) (Fission yeast).